The following is a 161-amino-acid chain: E3 ubiquitin ligase complex SCF subunit sconC (161 aa).

An interaction with the F-box domain of F-box proteins region spans residues 102–161; it reads ILAANYLDIKGLLDVGCKTVANMIKGKSPEEIRKTFNIQNDFTPEEEDQIRRENEWAEDR.

This sequence belongs to the SKP1 family. In terms of assembly, component of the SCF (SKP1-CUL1-F-box protein) E3 ubiquitin ligase complexes.

It participates in protein modification; protein ubiquitination. Its function is as follows. Essential component of the SCF (SKP1-CUL1-F-box protein) E3 ubiquitin ligase complexes, which mediate the ubiquitination and subsequent proteasomal degradation of target proteins. Controls sulfur metabolite repression, probably by mediating the inactivation or degradation of the metR transcription factor. This is E3 ubiquitin ligase complex SCF subunit sconC (sconC) from Aspergillus flavus (strain ATCC 200026 / FGSC A1120 / IAM 13836 / NRRL 3357 / JCM 12722 / SRRC 167).